A 267-amino-acid chain; its full sequence is Integral membrane protein 2C (267 aa).

Thr-37 carries the phosphothreonine modification. A helical; Signal-anchor for type II membrane protein membrane pass occupies residues 55-75; that stretch reads VGGVCYLSMGMVVLLMGLVFA. A BRICHOS domain is found at 136–230; it reads FGGGDPADII…LCNGKDTYRL (95 aa). Residues Cys-163 and Cys-222 are joined by a disulfide bond. A glycan (N-linked (GlcNAc...) asparagine) is linked at Asn-169.

It belongs to the ITM2 family. In terms of assembly, interacts with BACE1. Interacts with APP. Interacts with STMN2. Post-translationally, type I membrane-bound, as well as soluble, furin has a pre-eminent role in ITM2C proteolytic processing. PCSK7 and PCSK5 may also be involved although to a lesser extent. The soluble form of PCSK7 is incapable of processing ITM2C. Fails to undergo shedding by ADAM10 and intramembrane cleavage by SPPL2B. High levels in the brain, specifically in the cerebral cortex, medulla, amygdala, hippocampus, thalamus, caudate nucleus, cerebellum, olfactory lobe and spinal cord. Very low levels in other organs.

The protein resides in the lysosome membrane. It localises to the cell membrane. Negative regulator of amyloid-beta peptide production. May inhibit the processing of APP by blocking its access to alpha- and beta-secretase. Binding to the beta-secretase-cleaved APP C-terminal fragment is negligible, suggesting that ITM2C is a poor gamma-secretase cleavage inhibitor. May play a role in TNF-induced cell death and neuronal differentiation. The protein is Integral membrane protein 2C (ITM2C) of Homo sapiens (Human).